A 219-amino-acid polypeptide reads, in one-letter code: Response regulator ArlR (219 aa).

In terms of domain architecture, Response regulatory spans 3-116; it reads QILIVEDEQN…ELLARIRAIL (114 aa). The residue at position 52 (aspartate 52) is a 4-aspartylphosphate. A DNA-binding region (ompR/PhoB-type) is located at residues 122–219; the sequence is KDIIDVNGIT…TVRGVGYVIR (98 aa).

In terms of processing, phosphorylated by ArlS.

It is found in the cytoplasm. Member of the two-component regulatory system ArlS/ArlR involved in the regulation of adhesion, autolysis, multidrug resistance and virulence. In Staphylococcus aureus (strain USA300), this protein is Response regulator ArlR (arlR).